The following is a 356-amino-acid chain: Peptide chain release factor 1 (356 aa).

At Gln-233 the chain carries N5-methylglutamine.

The protein belongs to the prokaryotic/mitochondrial release factor family. Methylated by PrmC. Methylation increases the termination efficiency of RF1.

The protein localises to the cytoplasm. Its function is as follows. Peptide chain release factor 1 directs the termination of translation in response to the peptide chain termination codons UAG and UAA. This is Peptide chain release factor 1 from Syntrophotalea carbinolica (strain DSM 2380 / NBRC 103641 / GraBd1) (Pelobacter carbinolicus).